The chain runs to 180 residues: Ribulose bisphosphate carboxylase small subunit, chloroplastic 3 (180 aa).

The transit peptide at 1-56 (MASMISSSAVTTVSRASTVQSAAVAPFGGLKSMTGFPVKKVNTDITSITSNGGRVK) directs the protein to the chloroplast.

The protein belongs to the RuBisCO small chain family. As to quaternary structure, heterohexadecamer of 8 large and 8 small subunits.

It localises to the plastid. It is found in the chloroplast. In terms of biological role, ruBisCO catalyzes two reactions: the carboxylation of D-ribulose 1,5-bisphosphate, the primary event in carbon dioxide fixation, as well as the oxidative fragmentation of the pentose substrate. Both reactions occur simultaneously and in competition at the same active site. Although the small subunit is not catalytic it is essential for maximal activity. Binds to abscisic acid (ABA); only half of the possible binding sites are occupied in the crystal; and there are indications this is a low affinity site. In Pisum sativum (Garden pea), this protein is Ribulose bisphosphate carboxylase small subunit, chloroplastic 3 (RBCS.3A).